The following is a 90-amino-acid chain: Acylphosphatase (90 aa).

Residues 5 to 90 (GCKVIVSGIV…YQKTNDFIAC (86 aa)) form the Acylphosphatase-like domain. Active-site residues include R20 and N38.

It belongs to the acylphosphatase family.

The catalysed reaction is an acyl phosphate + H2O = a carboxylate + phosphate + H(+). This is Acylphosphatase (acyP) from Psychromonas ingrahamii (strain DSM 17664 / CCUG 51855 / 37).